Consider the following 515-residue polypeptide: Na(+)/H(+) antiporter NhaB (515 aa).

13 helical membrane passes run 23-43, 44-64, 88-108, 119-139, 143-163, 202-222, 238-258, 303-323, 324-344, 357-377, 389-409, 447-467, and 477-497; these read IIVFLILNPILYFLISPFIAG, WCLVIEFIFTLAMALKCYPLQ, IMASFEVILLLMFMVAGIYFM, LLITVRSKIVLSLSFCLSAAF, FLDALTVVAVIISVVMGFYGV, LMMHAGVGTALGGVMTLVGEP, FFIRMAPVTVPVLICGLITCV, GIIGIWLVCGLAFHLAAVGLI, GLSVIVLTTAFCGITSESTIG, LVVFFSVVAVIIDQHLFGPII, LLLFYGFNGLLSAISDNVFVA, ATPNGQAAFLFLLTSSLAPLI, and MALPYTIVLTVVGLLAVEYIL.

This sequence belongs to the NhaB Na(+)/H(+) (TC 2.A.34) antiporter family.

It is found in the cell inner membrane. It carries out the reaction 2 Na(+)(in) + 3 H(+)(out) = 2 Na(+)(out) + 3 H(+)(in). In terms of biological role, na(+)/H(+) antiporter that extrudes sodium in exchange for external protons. This Mannheimia succiniciproducens (strain KCTC 0769BP / MBEL55E) protein is Na(+)/H(+) antiporter NhaB.